The primary structure comprises 70 residues: Putative microRNA 17 host gene protein (70 aa).

At 1–20 (MFCHVDVKISSKRYTWTKLP) the chain is on the cytoplasmic side. The chain crosses the membrane as a helical span at residues 21–43 (LNVPKLVLIYLQSHFVLFFFSMC). Residues 44–70 (QSIWERPAIGRATTSSASWMVGYDCLL) lie on the Extracellular side of the membrane.

In terms of tissue distribution, highly expressed in B-cell lymphoma and lung cancer.

Its subcellular location is the membrane. This Homo sapiens (Human) protein is Putative microRNA 17 host gene protein (MIR17HG).